The primary structure comprises 163 residues: Phosphopantetheine adenylyltransferase (163 aa).

Residue T10 coordinates substrate. ATP contacts are provided by residues 10–11 (TF) and H18. Residues K42, L74, and R88 each coordinate substrate. ATP is bound by residues 89 to 91 (GLR), E99, and 124 to 130 (NSFISST).

This sequence belongs to the bacterial CoaD family. In terms of assembly, homohexamer. Requires Mg(2+) as cofactor.

It localises to the cytoplasm. The catalysed reaction is (R)-4'-phosphopantetheine + ATP + H(+) = 3'-dephospho-CoA + diphosphate. The protein operates within cofactor biosynthesis; coenzyme A biosynthesis; CoA from (R)-pantothenate: step 4/5. Functionally, reversibly transfers an adenylyl group from ATP to 4'-phosphopantetheine, yielding dephospho-CoA (dPCoA) and pyrophosphate. This is Phosphopantetheine adenylyltransferase from Shewanella sp. (strain W3-18-1).